Consider the following 327-residue polypeptide: CREB homolog crh-1 (327 aa).

The 60-residue stretch at S16–V75 folds into the KID domain. Disordered regions lie at residues Q27–G114 and K151–L200. Basic and acidic residues predominate over residues E35 to N44. S48 is modified (phosphoserine). A compositionally biased stretch (basic and acidic residues) spans I52–E68. The segment covering P71–S84 has biased composition (polar residues). Residues G161–P172 are compositionally biased toward gly residues. Over residues G173–S199 the composition is skewed to low complexity. The bZIP domain maps to N266 to E317. The basic motif stretch occupies residues R267–K292. A coiled-coil region spans residues R284 to L318. The tract at residues L294–L315 is leucine-zipper.

It belongs to the bZIP family. In terms of assembly, interacts with CREB-regulated transcription coactivator homolog crtc-1. Post-translationally, transcriptional activity is enhanced by phosphorylation. Phosphorylated by cmk-1. As to expression, expressed widely, including in head neurons AFD, gustatory neurons ASE, the olfactory neurons AWC, and in the ASI sensory neurons, as well as in the intestine and gonads in hermaphrodites.

It localises to the nucleus. Its function is as follows. Transcription factor. Transcriptional activity probably positively regulated by phosphorylation. Modulates expression of target genes, acting by binding to regulatory cAMP response elements (CRE). Acts downstream of the calcium-triggered CaMKK-CaMK1 signaling cascade, consisting of the protein kinase kinase ckk-1 and the protein kinase cmk-1. Plays a role in learning and memory, feeding behavior, stress response, entry into the dauer stage and modulation of lifespan. Involved in commitment to the developmentally arrested larval state known as dauer, acting by positively regulating the expression of dauer-inhibiting TGF-beta-like daf-7 in the ASI neurons. Plays a role in both associative and non-associative long-term memory (LTM). Involved in modulating feeding behavior, acting by regulating transcription of tryptophan hydroxylase tph-1 in serotonergic ADF neurons. Regulates transcription of genes involved in endoplasmic reticulum (ER) stress. Involved in modulation of lifespan, in response to raised temperature, but independently of the heat-shock response pathway, acting by regulating transcription of FMRFamide-like neuropeptides flp-6 in the AFD neuron. Plays a role in associative long-term memory (LTM) and learning. In terms of biological role, plays a role in associative long-term memory (LTM) and learning; perhaps required at the time of acquisition and/or the consolidation phase of memory formation. In Caenorhabditis elegans, this protein is CREB homolog crh-1.